A 347-amino-acid chain; its full sequence is Suppressor of RNA-mediated gene silencing (347 aa).

This sequence belongs to the phytoreovirus non-structural protein 10 family.

Functionally, suppressor of RNA-mediated gene silencing, also known as post-transcriptional gene silencing (PTGS), a mechanism of plant viral defense that limits the accumulation of viral RNAs. This chain is Suppressor of RNA-mediated gene silencing, found in Catharanthus roseus (Madagascar periwinkle).